Here is a 250-residue protein sequence, read N- to C-terminus: Tripartite motif-containing protein 74 (250 aa).

The segment at 16–57 (CPICLEVFKESLMLQCGHSYCKGCLVSLSYHLDTKVRCPMCW) adopts an RING-type zinc-finger fold. Residues 84 to 125 (PEPKVCVHHRNPLSLFCEKDQELICGLCGLLGSHQHHPVTPV) form a B box-type zinc finger. Positions 89, 92, 111, and 117 each coordinate Zn(2+). Coiled coils occupy residues 125 to 169 (VSTV…NESD) and 204 to 235 (LVAS…FGNE).

The protein belongs to the TRIM/RBCC family.

The sequence is that of Tripartite motif-containing protein 74 (TRIM74) from Homo sapiens (Human).